A 156-amino-acid chain; its full sequence is Small ribosomal subunit protein uS7 (156 aa).

The protein belongs to the universal ribosomal protein uS7 family. Part of the 30S ribosomal subunit. Contacts proteins S9 and S11.

In terms of biological role, one of the primary rRNA binding proteins, it binds directly to 16S rRNA where it nucleates assembly of the head domain of the 30S subunit. Is located at the subunit interface close to the decoding center, probably blocks exit of the E-site tRNA. The chain is Small ribosomal subunit protein uS7 from Mycobacterium ulcerans (strain Agy99).